The following is a 342-amino-acid chain: Cilia- and flagella-associated protein 36 (342 aa).

Phosphoserine is present on residues S85 and S147. The stretch at 150–187 (EHEEMKILREVLRKSKEEYDQEEERKRKKQLSEAKTEE) forms a coiled coil. The tract at residues 166–194 (EEYDQEEERKRKKQLSEAKTEEPTVHSSE) is disordered. Basic and acidic residues predominate over residues 179–189 (QLSEAKTEEPT). S201 carries the post-translational modification Phosphoserine. 2 disordered regions span residues 229–250 (RKVE…PGLE) and 282–322 (KLMS…AEEK). 2 stretches are compositionally biased toward basic and acidic residues: residues 282–292 (KLMSMRKDMRT) and 300–322 (QKGK…AEEK).

Belongs to the CFAP36 family. In terms of assembly, interacts with ARL3. Expressed in several human tissues including brain, testis, heart, lung, pancreas and spleen (at protein level).

The protein localises to the nucleus. The protein resides in the cytoplasm. It is found in the cell projection. Its subcellular location is the cilium. It localises to the flagellum. In terms of biological role, may act as an effector for ARL3. In Homo sapiens (Human), this protein is Cilia- and flagella-associated protein 36 (CFAP36).